We begin with the raw amino-acid sequence, 114 residues long: UPF0757 protein YmgG (114 aa).

It belongs to the UPF0757 family.

The protein is UPF0757 protein YmgG of Shigella flexneri.